The primary structure comprises 480 residues: Protein nucleotidyltransferase YdiU (480 aa).

Positions 86, 88, 89, 109, 121, 122, 172, and 179 each coordinate ATP. Asp-248 (proton acceptor) is an active-site residue. 2 residues coordinate Mg(2+): Asn-249 and Asp-258. ATP is bound at residue Asp-258.

Belongs to the SELO family. The cofactor is Mg(2+). Mn(2+) serves as cofactor.

The catalysed reaction is L-seryl-[protein] + ATP = 3-O-(5'-adenylyl)-L-seryl-[protein] + diphosphate. It carries out the reaction L-threonyl-[protein] + ATP = 3-O-(5'-adenylyl)-L-threonyl-[protein] + diphosphate. The enzyme catalyses L-tyrosyl-[protein] + ATP = O-(5'-adenylyl)-L-tyrosyl-[protein] + diphosphate. It catalyses the reaction L-histidyl-[protein] + UTP = N(tele)-(5'-uridylyl)-L-histidyl-[protein] + diphosphate. The catalysed reaction is L-seryl-[protein] + UTP = O-(5'-uridylyl)-L-seryl-[protein] + diphosphate. It carries out the reaction L-tyrosyl-[protein] + UTP = O-(5'-uridylyl)-L-tyrosyl-[protein] + diphosphate. Functionally, nucleotidyltransferase involved in the post-translational modification of proteins. It can catalyze the addition of adenosine monophosphate (AMP) or uridine monophosphate (UMP) to a protein, resulting in modifications known as AMPylation and UMPylation. The sequence is that of Protein nucleotidyltransferase YdiU from Salmonella agona (strain SL483).